The chain runs to 254 residues: UPF0246 protein CPE2152 (254 aa).

Belongs to the UPF0246 family.

This chain is UPF0246 protein CPE2152, found in Clostridium perfringens (strain 13 / Type A).